We begin with the raw amino-acid sequence, 101 residues long: Small ribosomal subunit protein uS10 (101 aa).

The protein belongs to the universal ribosomal protein uS10 family. In terms of assembly, part of the 30S ribosomal subunit.

Involved in the binding of tRNA to the ribosomes. The chain is Small ribosomal subunit protein uS10 from Parabacteroides distasonis (strain ATCC 8503 / DSM 20701 / CIP 104284 / JCM 5825 / NCTC 11152).